The following is a 318-amino-acid chain: Aspartate carbamoyltransferase catalytic subunit (318 aa).

2 residues coordinate carbamoyl phosphate: Arg-58 and Thr-59. Position 86 (Lys-86) interacts with L-aspartate. Carbamoyl phosphate is bound by residues Arg-108, His-141, and Gln-144. L-aspartate contacts are provided by Arg-174 and Arg-226. The carbamoyl phosphate site is built by Gly-270 and Pro-271.

The protein belongs to the aspartate/ornithine carbamoyltransferase superfamily. ATCase family. As to quaternary structure, heterododecamer (2C3:3R2) of six catalytic PyrB chains organized as two trimers (C3), and six regulatory PyrI chains organized as three dimers (R2).

It catalyses the reaction carbamoyl phosphate + L-aspartate = N-carbamoyl-L-aspartate + phosphate + H(+). The protein operates within pyrimidine metabolism; UMP biosynthesis via de novo pathway; (S)-dihydroorotate from bicarbonate: step 2/3. Catalyzes the condensation of carbamoyl phosphate and aspartate to form carbamoyl aspartate and inorganic phosphate, the committed step in the de novo pyrimidine nucleotide biosynthesis pathway. This chain is Aspartate carbamoyltransferase catalytic subunit, found in Lactobacillus delbrueckii subsp. bulgaricus (strain ATCC 11842 / DSM 20081 / BCRC 10696 / JCM 1002 / NBRC 13953 / NCIMB 11778 / NCTC 12712 / WDCM 00102 / Lb 14).